Reading from the N-terminus, the 377-residue chain is Bacterial actin-related protein (377 aa).

This sequence belongs to the actin family.

Its function is as follows. May be a dominant-negative inhibitor of eukaryotic actin polymerization. The protein is Bacterial actin-related protein (barP) of Haliangium ochraceum (strain DSM 14365 / JCM 11303 / SMP-2).